A 468-amino-acid chain; its full sequence is 6-phosphogluconate dehydrogenase, decarboxylating (468 aa).

NADP(+) contacts are provided by residues 10 to 15 (GMAVMG), 33 to 35 (NRS), 74 to 76 (VKA), and asparagine 102. Substrate-binding positions include asparagine 102 and 128–130 (SGG). The active-site Proton acceptor is lysine 183. Substrate is bound at residue 186 to 187 (HN). Catalysis depends on glutamate 190, which acts as the Proton donor. Tyrosine 191, lysine 260, arginine 287, arginine 445, and histidine 451 together coordinate substrate.

It belongs to the 6-phosphogluconate dehydrogenase family. As to quaternary structure, homodimer.

It catalyses the reaction 6-phospho-D-gluconate + NADP(+) = D-ribulose 5-phosphate + CO2 + NADPH. It participates in carbohydrate degradation; pentose phosphate pathway; D-ribulose 5-phosphate from D-glucose 6-phosphate (oxidative stage): step 3/3. Catalyzes the oxidative decarboxylation of 6-phosphogluconate to ribulose 5-phosphate and CO(2), with concomitant reduction of NADP to NADPH. This chain is 6-phosphogluconate dehydrogenase, decarboxylating (gnd), found in Salmonella typhimurium (strain LT2 / SGSC1412 / ATCC 700720).